The following is a 255-amino-acid chain: Aliphatic sulfonates import ATP-binding protein SsuB (255 aa).

The 225-residue stretch at 7 to 231 (IKEKAFVQEG…PRNRTTPDFQ (225 aa)) folds into the ABC transporter domain. ATP is bound at residue 39–46 (GPSGCGKS).

Belongs to the ABC transporter superfamily. Aliphatic sulfonates importer (TC 3.A.1.17.2) family. As to quaternary structure, the complex is composed of two ATP-binding proteins (SsuB), two transmembrane proteins (SsuC) and a solute-binding protein (SsuA).

The protein localises to the cell membrane. The catalysed reaction is ATP + H2O + aliphatic sulfonate-[sulfonate-binding protein]Side 1 = ADP + phosphate + aliphatic sulfonateSide 2 + [sulfonate-binding protein]Side 1.. Part of the ABC transporter complex SsuABC involved in aliphatic sulfonates import. Responsible for energy coupling to the transport system. Is also involved in taurine transport. The protein is Aliphatic sulfonates import ATP-binding protein SsuB of Bacillus subtilis (strain 168).